A 281-amino-acid polypeptide reads, in one-letter code: Very long chain fatty acid elongase 7 (281 aa).

Alanine 2 carries the post-translational modification N-acetylalanine. Topologically, residues alanine 2–aspartate 27 are lumenal. Residues tryptophan 28 to valine 48 form a helical membrane-spanning segment. At threonine 49–asparagine 72 the chain is on the cytoplasmic side. The chain crosses the membrane as a helical span at residues phenylalanine 73–isoleucine 93. Residues glycine 94–arginine 115 are Lumenal-facing. Cysteines 99 and 231 form a disulfide. The helical transmembrane segment at threonine 116–leucine 136 threads the bilayer. The 3-oxoeicosanoyl-CoA site is built by lysine 124, arginine 137, lysine 139, glutamine 142, and histidine 147. Residues arginine 137–glutamine 142 lie on the Cytoplasmic side of the membrane. The chain crosses the membrane as a helical span at residues valine 143–valine 162. Positions histidine 147–histidine 151 match the HxxHH motif motif. Histidine 150 (nucleophile) is an active-site residue. At lysine 163 to threonine 171 the chain is on the lumenal side. Residues phenylalanine 172 to glycine 194 traverse the membrane as a helical segment. Tyrosine 187, lysine 204, threonine 208, and glutamine 211 together coordinate 3-oxoeicosanoyl-CoA. Over proline 195–tyrosine 206 the chain is Cytoplasmic. The helical transmembrane segment at leucine 207 to phenylalanine 227 threads the bilayer. Over methionine 228–proline 236 the chain is Lumenal. Residues valine 237 to tryptophan 257 form a helical membrane-spanning segment. Residues tyrosine 258–asparagine 281 are Cytoplasmic-facing. Residue arginine 266 participates in 3-oxoeicosanoyl-CoA binding. The short motif at lysine 277–asparagine 281 is the Di-lysine motif element.

Belongs to the ELO family. ELOVL7 subfamily. Homodimer. Interacts with TECR. Expressed in most tissues except heart and skeletal muscle.

It localises to the endoplasmic reticulum membrane. It catalyses the reaction a very-long-chain acyl-CoA + malonyl-CoA + H(+) = a very-long-chain 3-oxoacyl-CoA + CO2 + CoA. The enzyme catalyses eicosanoyl-CoA + malonyl-CoA + H(+) = 3-oxodocosanoyl-CoA + CO2 + CoA. The catalysed reaction is (5Z,8Z,11Z,14Z)-eicosatetraenoyl-CoA + malonyl-CoA + H(+) = (7Z,10Z,13Z,16Z)-3-oxodocosatetraenoyl-CoA + CO2 + CoA. It carries out the reaction (6Z,9Z,12Z)-octadecatrienoyl-CoA + malonyl-CoA + H(+) = (8Z,11Z,14Z)-3-oxoeicosatrienoyl-CoA + CO2 + CoA. It catalyses the reaction (9Z,12Z)-octadecadienoyl-CoA + malonyl-CoA + H(+) = (11Z,14Z)-3-oxoicosa-11,14-dienoyl-CoA + CO2 + CoA. The enzyme catalyses (9Z)-octadecenoyl-CoA + malonyl-CoA + H(+) = 3-oxo-(11Z)-eicosenoyl-CoA + CO2 + CoA. The catalysed reaction is octadecanoyl-CoA + malonyl-CoA + H(+) = 3-oxoeicosanoyl-CoA + CO2 + CoA. It carries out the reaction hexadecanoyl-CoA + malonyl-CoA + H(+) = 3-oxooctadecanoyl-CoA + CO2 + CoA. It catalyses the reaction (9Z,12Z,15Z)-octadecatrienoyl-CoA + malonyl-CoA + H(+) = (11Z,14Z,17Z)-3-oxoeicosatrienoyl-CoA + CO2 + CoA. Its pathway is lipid metabolism; fatty acid biosynthesis. Functionally, catalyzes the first and rate-limiting reaction of the four reactions that constitute the long-chain fatty acids elongation cycle. This endoplasmic reticulum-bound enzymatic process allows the addition of 2 carbons to the chain of long- and very long-chain fatty acids (VLCFAs) per cycle. Condensing enzyme with higher activity toward C18 acyl-CoAs, especially C18:3(n-3) acyl-CoAs and C18:3(n-6)-CoAs. Also active toward C20:4-, C18:0-, C18:1-, C18:2- and C16:0-CoAs, and weakly toward C20:0-CoA. Little or no activity toward C22:0-, C24:0-, or C26:0-CoAs. May participate in the production of saturated and polyunsaturated VLCFAs of different chain lengths that are involved in multiple biological processes as precursors of membrane lipids and lipid mediators. The chain is Very long chain fatty acid elongase 7 from Homo sapiens (Human).